The following is a 621-amino-acid chain: Pentatricopeptide repeat-containing protein At1g12620 (621 aa).

16 PPR repeats span residues 36–70 (GKVS…RPRP), 71–105 (RLID…GIAH), 106–140 (NLYT…GYEP), 141–175 (DTVT…GHKP), 176–210 (TLIT…GFQP), 211–245 (NEVT…KIKL), 246–280 (DAVK…GFKA), 281–315 (DIII…KITP), 316–350 (DVVA…GISP), 351–385 (DTVT…GCGP), 386–420 (NIRT…GVVA), 421–455 (DTVT…RVRP), 456–490 (DIVS…KMEL), 491–525 (DIGI…GVKP), 526–560 (DVKT…GHSP), and 561–595 (NGCT…GFSV).

Belongs to the PPR family. P subfamily.

The sequence is that of Pentatricopeptide repeat-containing protein At1g12620 from Arabidopsis thaliana (Mouse-ear cress).